Here is a 441-residue protein sequence, read N- to C-terminus: UDP-N-acetylmuramoylalanine--D-glutamate ligase (441 aa).

129 to 135 (GTNGKST) contacts ATP.

Belongs to the MurCDEF family.

It localises to the cytoplasm. It carries out the reaction UDP-N-acetyl-alpha-D-muramoyl-L-alanine + D-glutamate + ATP = UDP-N-acetyl-alpha-D-muramoyl-L-alanyl-D-glutamate + ADP + phosphate + H(+). The protein operates within cell wall biogenesis; peptidoglycan biosynthesis. Cell wall formation. Catalyzes the addition of glutamate to the nucleotide precursor UDP-N-acetylmuramoyl-L-alanine (UMA). The chain is UDP-N-acetylmuramoylalanine--D-glutamate ligase from Zymomonas mobilis subsp. mobilis (strain ATCC 31821 / ZM4 / CP4).